The following is a 279-amino-acid chain: Phosphatidylglycerol--prolipoprotein diacylglyceryl transferase (279 aa).

7 consecutive transmembrane segments (helical) span residues 22 to 42, 58 to 78, 89 to 109, 128 to 148, 195 to 215, 223 to 243, and 256 to 276; these read SAHWYGLMYLIGFYFIMWSSI, ILYFSFLNALIGGRIGYVIFY, FIFKVWEGGMSFHGGLLGSII, FLVPLIPFGLGFGRIGNFING, ISQLYEMFLEGILLFIILNIF, GYMSGLFLILYGSFRIIAEFF, and YISLGQILSIPMILYGLILII. A 1,2-diacyl-sn-glycero-3-phospho-(1'-sn-glycerol) is bound at residue Arg141.

It belongs to the Lgt family.

It localises to the cell membrane. It catalyses the reaction L-cysteinyl-[prolipoprotein] + a 1,2-diacyl-sn-glycero-3-phospho-(1'-sn-glycerol) = an S-1,2-diacyl-sn-glyceryl-L-cysteinyl-[prolipoprotein] + sn-glycerol 1-phosphate + H(+). Its pathway is protein modification; lipoprotein biosynthesis (diacylglyceryl transfer). Functionally, catalyzes the transfer of the diacylglyceryl group from phosphatidylglycerol to the sulfhydryl group of the N-terminal cysteine of a prolipoprotein, the first step in the formation of mature lipoproteins. This chain is Phosphatidylglycerol--prolipoprotein diacylglyceryl transferase, found in Wigglesworthia glossinidia brevipalpis.